The following is a 436-amino-acid chain: MSEARKLFIKTYGCQMNVYDSERMAEALGAKGYVLTEVAEEADMVLLNTCHIREKAAEKVYSDLGRLRPLKTAKPDLKIGVAGCVAQAEGEEILKRMPLVDLVVGPQSYHRLPDMLDRTEGGARVVDTDFPEEDKFDHLPERKATRGPAAFLTVQEGCDKFCAFCVVPYTRGAEVSRPFARLMAEARGLVERGVREITLLGQNVNAWSSDGRGLGGLIRELARIDGLERLRYTTSHPNDMADDLIEAHGAEPKLMPYLHLPVQSGSDRILKAMNRKHTAEHYLRLIERIRAARPDILLTSDFIVGFPGETEADFEATLDLIRAVGFGSAFSFKYSARPGTPAAEKPELPGEVCDARLQRLQALVTEQQRAAQMAMVGREVGVLYEKAGRLPGQMVGKSDHLHAVHVEDKAGRVGDLVRVRITASAPNSLAGERLGA.

Positions 5–121 (RKLFIKTYGC…LPDMLDRTEG (117 aa)) constitute an MTTase N-terminal domain. [4Fe-4S] cluster is bound by residues cysteine 14, cysteine 50, cysteine 84, cysteine 158, cysteine 162, and cysteine 165. In terms of domain architecture, Radical SAM core spans 144–374 (ATRGPAAFLT…TEQQRAAQMA (231 aa)). The TRAM domain occupies 373–435 (MAMVGREVGV…PNSLAGERLG (63 aa)).

The protein belongs to the methylthiotransferase family. MiaB subfamily. As to quaternary structure, monomer. The cofactor is [4Fe-4S] cluster.

Its subcellular location is the cytoplasm. The enzyme catalyses N(6)-dimethylallyladenosine(37) in tRNA + (sulfur carrier)-SH + AH2 + 2 S-adenosyl-L-methionine = 2-methylsulfanyl-N(6)-dimethylallyladenosine(37) in tRNA + (sulfur carrier)-H + 5'-deoxyadenosine + L-methionine + A + S-adenosyl-L-homocysteine + 2 H(+). Catalyzes the methylthiolation of N6-(dimethylallyl)adenosine (i(6)A), leading to the formation of 2-methylthio-N6-(dimethylallyl)adenosine (ms(2)i(6)A) at position 37 in tRNAs that read codons beginning with uridine. The protein is tRNA-2-methylthio-N(6)-dimethylallyladenosine synthase of Cereibacter sphaeroides (strain ATCC 17029 / ATH 2.4.9) (Rhodobacter sphaeroides).